A 780-amino-acid polypeptide reads, in one-letter code: Protein SEY1 (780 aa).

Topologically, residues 1–680 (MDSKEEAIQL…KRSMIKTTTH (680 aa)) are cytoplasmic. Positions 35 to 265 (GVNYHVISVF…NEDYYFKPEY (231 aa)) constitute a GB1/RHD3-type G domain. GTP is bound at residue 45–52 (GSQSSGKS). Residues 440 to 463 (EVKEEVVKRFENDLKETSDKLRVT) adopt a coiled-coil conformation. The helical transmembrane segment at 681–701 (IPLWIYAIIVVLGWNEFMMVI) threads the bilayer. The Lumenal segment spans residues 702 to 704 (RNP). A helical membrane pass occupies residues 705 to 725 (LFVTLTILILVSFYFINKFDL). The Cytoplasmic segment spans residues 726–780 (WGPVKSVAQTAAGETIGTIKTKLRDFVLEEHEKTPKIQSEKSNSDSEKVVENEKS). The tract at residues 756-780 (HEKTPKIQSEKSNSDSEKVVENEKS) is disordered.

Belongs to the TRAFAC class dynamin-like GTPase superfamily. GB1/RHD3 GTPase family. RHD3 subfamily.

The protein resides in the endoplasmic reticulum membrane. Its function is as follows. Cooperates with the reticulon proteins and tubule-shaping DP1 family proteins to generate and maintain the structure of the tubular endoplasmic reticulum network. Has GTPase activity, which is required for its function in ER organization. The protein is Protein SEY1 of Vanderwaltozyma polyspora (strain ATCC 22028 / DSM 70294 / BCRC 21397 / CBS 2163 / NBRC 10782 / NRRL Y-8283 / UCD 57-17) (Kluyveromyces polysporus).